The sequence spans 304 residues: Opsin-1 (304 aa).

The Extracellular segment spans residues 1 to 45; it reads MIHPEQVADMLRPTTSTTSSHVPGPVPTVVPTPTEYQTLGETGHR. Residues 46–66 traverse the membrane as a helical segment; the sequence is TLWVTFALMVLSSGIFALLSW. A helical membrane pass occupies residues 74-94; it reads LFHVITTLITVVASLSYFAMA. The helical transmembrane segment at 129-149 threads the bilayer; sequence YVDWALTTPLLLLELCLLAGV. The chain crosses the membrane as a helical span at residues 154–174; the sequence is TLMAIVADVIMVLCGLFAALG. A helical transmembrane segment spans residues 183–203; that stretch reads WGWYTIGCFSYLFVIWHVALH. A helical transmembrane segment spans residues 219–239; that stretch reads FTGLAVFALLLWTAYPIIWGI. A helical membrane pass occupies residues 252-272; sequence ILIYTVLDLLAKPVFGFWLLL. At Lys263 the chain carries N6-(retinylidene)lysine. The Cytoplasmic segment spans residues 273–304; that stretch reads SHRAMPETNIDLPGYWSHGLATEGRIRIGEED.

It belongs to the archaeal/bacterial/fungal opsin family. Post-translationally, binds all-trans retinal via a protonated Schiff base linkage.

The protein localises to the membrane. Functionally, could facilitate a sensory photoresponse. This is Opsin-1 (nop-1) from Neurospora crassa (strain ATCC 24698 / 74-OR23-1A / CBS 708.71 / DSM 1257 / FGSC 987).